Reading from the N-terminus, the 408-residue chain is MWAFPELPLPLLVNLFGSLLGFVATVTLIPAFRSHFIAARLCGQDLNKLSRQQIPESQGVICGAVFLIILFCFIPFPFLNCFVEEQCKAFPHHEFVALIGALLAICCMIFLGFADDVLNLPWRHKLLLPTAASLPLLMVYFTNFGNTTIVVPKPFRWILGLHLDLGILYYVYMGLLAVFCTNAINILAGINGLEAGQSLVISASIIVFNLVELEGDYRDDHVFSLYFMIPFFFTTLGLLYHNWYPSQVFVGDTFCYFAGMTFAVVGILGHFSKTMLLFFIPQVFNFLYSLPQLLHAIPCPRHRIPRLNPKTGKLEMSYSKFKTKNLSFLGTFILKVAERLQLVTVHRGESEDGAFTECNNMTLINLLLKIFGPIHERNLTLLLLLLQILSSAVTFSIRYQLVRLFYDV.

Residues 1–10 (MWAFPELPLP) are Lumenal-facing. Residues 11–38 (LLVNLFGSLLGFVATVTLIPAFRSHFIA) form a helical membrane-spanning segment. The Cytoplasmic portion of the chain corresponds to 39–58 (ARLCGQDLNKLSRQQIPESQ). Residues 44 to 46 (QDL) and Glu56 contribute to the UDP-N-acetyl-alpha-D-glucosamine site. A helical transmembrane segment spans residues 59–78 (GVICGAVFLIILFCFIPFPF). Residues 79–91 (LNCFVEEQCKAFP) are Lumenal-facing. Residues 92-118 (HHEFVALIGALLAICCMIFLGFADDVL) traverse the membrane as a helical segment. Residues 119–121 (NLP) lie on the Cytoplasmic side of the membrane. The helical transmembrane segment at 122-143 (WRHKLLLPTAASLPLLMVYFTN) threads the bilayer. Lys125 contacts dolichyl phosphate. The Lumenal segment spans residues 144 to 166 (FGNTTIVVPKPFRWILGLHLDLG). The N-linked (GlcNAc...) asparagine glycan is linked to Asn146. The helical transmembrane segment at 167–186 (ILYYVYMGLLAVFCTNAINI) threads the bilayer. 178 to 186 (VFCTNAINI) contacts dolichyl phosphate. Mg(2+) is bound at residue Asn185. At 187–192 (LAGING) the chain is on the cytoplasmic side. Position 191 (Asn191) interacts with UDP-N-acetyl-alpha-D-glucosamine. Residues 193-213 (LEAGQSLVISASIIVFNLVEL) traverse the membrane as a helical segment. Residues 214 to 218 (EGDYR) are Lumenal-facing. A helical transmembrane segment spans residues 219–242 (DDHVFSLYFMIPFFFTTLGLLYHN). Residues 243–250 (WYPSQVFV) are Cytoplasmic-facing. The chain crosses the membrane as a helical span at residues 251–269 (GDTFCYFAGMTFAVVGILG). Mg(2+) is bound at residue Asp252. The Lumenal segment spans residues 270 to 271 (HF). Residues 272–293 (SKTMLLFFIPQVFNFLYSLPQL) traverse the membrane as a helical segment. Residues 294-375 (LHAIPCPRHR…LLLKIFGPIH (82 aa)) are Cytoplasmic-facing. 301 to 303 (RHR) provides a ligand contact to UDP-N-acetyl-alpha-D-glucosamine. A helical transmembrane segment spans residues 376-400 (ERNLTLLLLLLQILSSAVTFSIRYQ). The Lumenal portion of the chain corresponds to 401-408 (LVRLFYDV).

It belongs to the glycosyltransferase 4 family. As to quaternary structure, homodimer. Mg(2+) is required as a cofactor.

The protein resides in the endoplasmic reticulum membrane. It carries out the reaction a di-trans,poly-cis-dolichyl phosphate + UDP-N-acetyl-alpha-D-glucosamine = an N-acetyl-alpha-D-glucosaminyl-diphospho-di-trans,poly-cis-dolichol + UMP. It functions in the pathway protein modification; protein glycosylation. Its activity is regulated as follows. Inhibited by natural nucleoside antibiotic tunicamycin, which acts as a structural analog and competitor of UDP-GlcNAc. Functionally, UDP-N-acetylglucosamine--dolichyl-phosphate N-acetylglucosaminephosphotransferase that operates in the biosynthetic pathway of dolichol-linked oligosaccharides, the glycan precursors employed in protein asparagine (N)-glycosylation. The assembly of dolichol-linked oligosaccharides begins on the cytosolic side of the endoplasmic reticulum membrane and finishes in its lumen. The sequential addition of sugars to dolichol pyrophosphate produces dolichol-linked oligosaccharides containing fourteen sugars, including two GlcNAcs, nine mannoses and three glucoses. Once assembled, the oligosaccharide is transferred from the lipid to nascent proteins by oligosaccharyltransferases. Catalyzes the initial step of dolichol-linked oligosaccharide biosynthesis, transfering GlcNAc-1-P from cytosolic UDP-GlcNAc onto the carrier lipid dolichyl phosphate (P-dolichol), yielding GlcNAc-P-P-dolichol embedded in the cytoplasmic leaflet of the endoplasmic reticulum membrane. The sequence is that of UDP-N-acetylglucosamine--dolichyl-phosphate N-acetylglucosaminephosphotransferase (DPAGT1) from Cricetulus longicaudatus (Long-tailed dwarf hamster).